The primary structure comprises 147 residues: MKIMVINGPNLNMLGIREKNIYGTFSYDDLCKYIKDYPEYKDKNIEFEFLQSNVEGEIVNFIQEAYSKKYDGIILNAGGYTHTSVAIHDAIKAVSIPTVEVHISNIHAREDFRKVCVTSPACIGQITGLGKLGYILAVVYLIEYYNK.

Tyrosine 22 (proton acceptor) is an active-site residue. Residues asparagine 76, histidine 82, and aspartate 89 each contribute to the substrate site. Catalysis depends on histidine 102, which acts as the Proton donor. Substrate-binding positions include 103 to 104 (IS) and arginine 113.

The protein belongs to the type-II 3-dehydroquinase family. In terms of assembly, homododecamer.

The catalysed reaction is 3-dehydroquinate = 3-dehydroshikimate + H2O. Its pathway is metabolic intermediate biosynthesis; chorismate biosynthesis; chorismate from D-erythrose 4-phosphate and phosphoenolpyruvate: step 3/7. Catalyzes a trans-dehydration via an enolate intermediate. This chain is 3-dehydroquinate dehydratase, found in Fusobacterium nucleatum subsp. nucleatum (strain ATCC 25586 / DSM 15643 / BCRC 10681 / CIP 101130 / JCM 8532 / KCTC 2640 / LMG 13131 / VPI 4355).